A 101-amino-acid chain; its full sequence is Small ubiquitin-related modifier 1 (101 aa).

In terms of domain architecture, Ubiquitin-like spans 20 to 97 (EYIKLKVIGQ…IEVYQEQTGG (78 aa)). Gly97 is covalently cross-linked (Glycyl lysine isopeptide (Gly-Lys) (interchain with K-? in acceptor proteins)). Positions 98–101 (HSTV) are excised as a propeptide.

It belongs to the ubiquitin family. SUMO subfamily. As to quaternary structure, interacts with SAE2, UBE2I, RANBP2, PIAS1 and PIAS2. Covalently attached to a number of proteins. Cleavage of precursor form by a sentrin-specific protease is necessary for function.

The protein localises to the nucleus membrane. Its subcellular location is the nucleus speckle. The protein resides in the cytoplasm. It is found in the nucleus. It localises to the PML body. The protein localises to the cell membrane. Ubiquitin-like protein that can be covalently attached to proteins as a monomer or a lysine-linked polymer. Covalent attachment via an isopeptide bond to its substrates requires prior activation by the E1 complex SAE1-SAE2 and linkage to the E2 enzyme UBE2I. This post-translational modification on lysine residues of proteins plays a crucial role in a number of cellular processes such as nuclear transport, DNA replication and repair, mitosis and signal transduction. Polymeric SUMO1 chains are also susceptible to polyubiquitination which functions as a signal for proteasomal degradation of modified proteins. The polypeptide is Small ubiquitin-related modifier 1 (SUMO1) (Gallus gallus (Chicken)).